The chain runs to 610 residues: Membrane protein insertase YidC (610 aa).

A helical transmembrane segment spans residues 7 to 27; that stretch reads FFITIALSILILALWQVFYLG. A disordered region spans residues 36–82; sequence QARIEEQQRQAQQAAQNRQASSSTGDTPQMPANPDSIPGQGDTKAAG. Residues 44-55 are compositionally biased toward low complexity; it reads RQAQQAAQNRQA. A run of 5 helical transmembrane segments spans residues 358 to 378, 387 to 407, 458 to 478, 510 to 530, and 546 to 566; these read FDLL…FYLI, NFGV…FPLA, WPVL…YVTI, TVPH…TMFL, and IFTW…AGLV.

Belongs to the OXA1/ALB3/YidC family. Type 1 subfamily. In terms of assembly, interacts with the Sec translocase complex via SecD. Specifically interacts with transmembrane segments of nascent integral membrane proteins during membrane integration.

It is found in the cell inner membrane. Its function is as follows. Required for the insertion and/or proper folding and/or complex formation of integral membrane proteins into the membrane. Involved in integration of membrane proteins that insert both dependently and independently of the Sec translocase complex, as well as at least some lipoproteins. Aids folding of multispanning membrane proteins. This chain is Membrane protein insertase YidC, found in Brucella suis biovar 1 (strain 1330).